Consider the following 205-residue polypeptide: MPPVVKRLGRVDYQPTFQAMQDFTASRTAETPDEIWIVEHPPVYTLGQAGKPEHILRDVGIPLVKIDRGGQVTYHGPGQVVIYLLLDLSRLKIKVRELVTAIEQSVIDLLAEYGITAERRDGAPGVYVGEAKIAALGLRIRNGCSYHGVSLNVDMDLSPFAAINPCGYAGLKVIQTKDFNIPLTAHEAGEQLSQHLLQQLDQKNG.

A BPL/LPL catalytic domain is found at alanine 29–asparagine 204. Residues arginine 68–histidine 75, alanine 135–glycine 137, and glycine 148–serine 150 each bind substrate. Cysteine 166 acts as the Acyl-thioester intermediate in catalysis.

This sequence belongs to the LipB family.

It localises to the cytoplasm. The catalysed reaction is octanoyl-[ACP] + L-lysyl-[protein] = N(6)-octanoyl-L-lysyl-[protein] + holo-[ACP] + H(+). It participates in protein modification; protein lipoylation via endogenous pathway; protein N(6)-(lipoyl)lysine from octanoyl-[acyl-carrier-protein]: step 1/2. In terms of biological role, catalyzes the transfer of endogenously produced octanoic acid from octanoyl-acyl-carrier-protein onto the lipoyl domains of lipoate-dependent enzymes. Lipoyl-ACP can also act as a substrate although octanoyl-ACP is likely to be the physiological substrate. The protein is Octanoyltransferase of Dechloromonas aromatica (strain RCB).